Consider the following 153-residue polypeptide: uncharacterized protein (153 aa).

This is an uncharacterized protein from Alkalihalophilus pseudofirmus (strain ATCC BAA-2126 / JCM 17055 / OF4) (Bacillus pseudofirmus).